We begin with the raw amino-acid sequence, 475 residues long: Aspartyl/glutamyl-tRNA(Asn/Gln) amidotransferase subunit B (475 aa).

It belongs to the GatB/GatE family. GatB subfamily. In terms of assembly, heterotrimer of A, B and C subunits.

It carries out the reaction L-glutamyl-tRNA(Gln) + L-glutamine + ATP + H2O = L-glutaminyl-tRNA(Gln) + L-glutamate + ADP + phosphate + H(+). The catalysed reaction is L-aspartyl-tRNA(Asn) + L-glutamine + ATP + H2O = L-asparaginyl-tRNA(Asn) + L-glutamate + ADP + phosphate + 2 H(+). Allows the formation of correctly charged Asn-tRNA(Asn) or Gln-tRNA(Gln) through the transamidation of misacylated Asp-tRNA(Asn) or Glu-tRNA(Gln) in organisms which lack either or both of asparaginyl-tRNA or glutaminyl-tRNA synthetases. The reaction takes place in the presence of glutamine and ATP through an activated phospho-Asp-tRNA(Asn) or phospho-Glu-tRNA(Gln). The sequence is that of Aspartyl/glutamyl-tRNA(Asn/Gln) amidotransferase subunit B from Hydrogenovibrio crunogenus (strain DSM 25203 / XCL-2) (Thiomicrospira crunogena).